The sequence spans 190 residues: DNA-binding transcriptional repressor TetR (190 aa).

The HTH tetR-type domain maps to 6 to 66 (ETRSAALLAV…AALDAHDASF (61 aa)). The H-T-H motif DNA-binding region spans 29–48 (SMDSVAALAHASKTTIYRRW).

As to quaternary structure, homodimer.

In terms of biological role, binds to its own palindromic promoter and represses transcription of its operon; addition of tetracycline or doxycycline (but not tigecycline) interferes with DNA binding. Addition of TetX to the DNA-TetR-antibiotic complex restores DNA binding. This chain is DNA-binding transcriptional repressor TetR, found in Mycobacteroides abscessus (strain ATCC 19977 / DSM 44196 / CCUG 20993 / CIP 104536 / JCM 13569 / NCTC 13031 / TMC 1543 / L948) (Mycobacterium abscessus).